Consider the following 36-residue polypeptide: Photosystem I reaction center subunit VIII (36 aa).

The helical transmembrane segment at 6 to 26 (LPSIFVPLVGLVFPAIAMASL) threads the bilayer.

Belongs to the PsaI family.

The protein resides in the plastid. It is found in the chloroplast thylakoid membrane. Functionally, may help in the organization of the PsaL subunit. The protein is Photosystem I reaction center subunit VIII of Liriodendron tulipifera (Tuliptree).